The primary structure comprises 144 residues: Large ribosomal subunit protein uL13 (144 aa).

The protein belongs to the universal ribosomal protein uL13 family. Part of the 50S ribosomal subunit.

Its function is as follows. This protein is one of the early assembly proteins of the 50S ribosomal subunit, although it is not seen to bind rRNA by itself. It is important during the early stages of 50S assembly. This chain is Large ribosomal subunit protein uL13, found in Magnetococcus marinus (strain ATCC BAA-1437 / JCM 17883 / MC-1).